The following is a 371-amino-acid chain: Putative glutamate--cysteine ligase 2 (371 aa).

This sequence belongs to the glutamate--cysteine ligase type 2 family. YbdK subfamily.

The enzyme catalyses L-cysteine + L-glutamate + ATP = gamma-L-glutamyl-L-cysteine + ADP + phosphate + H(+). ATP-dependent carboxylate-amine ligase which exhibits weak glutamate--cysteine ligase activity. This Paraburkholderia phytofirmans (strain DSM 17436 / LMG 22146 / PsJN) (Burkholderia phytofirmans) protein is Putative glutamate--cysteine ligase 2.